The sequence spans 1014 residues: Latrophilin-like protein 1 (1014 aa).

The signal sequence occupies residues M1–A27. N4 is a glycosylation site (N-linked (GlcNAc...) asparagine). Residues S28–T555 lie on the Extracellular side of the membrane. An SUEL-type lectin domain is found at I43–V134. The region spanning E359–D542 is the GAIN-B domain. N-linked (GlcNAc...) asparagine glycosylation is found at N473 and N518. 2 disulfides stabilise this stretch: C497–C524 and C512–C526. The GPS stretch occupies residues C497–D542. Residues Y556–F576 traverse the membrane as a helical segment. The Cytoplasmic portion of the chain corresponds to S577–V584. The chain crosses the membrane as a helical span at residues F585–I605. At T606–Q613 the chain is on the extracellular side. The helical transmembrane segment at C614–L634 threads the bilayer. The Cytoplasmic segment spans residues E635 to R653. The chain crosses the membrane as a helical span at residues F654 to Y674. Residues N675–N692 lie on the Extracellular side of the membrane. The helical transmembrane segment at F693–V713 threads the bilayer. At K714–K745 the chain is on the cytoplasmic side. The helical transmembrane segment at G746 to E766 threads the bilayer. Topologically, residues D767 to S770 are extracellular. The helical transmembrane segment at I771–F791 threads the bilayer. Over H792–L1014 the chain is Cytoplasmic. Disordered stretches follow at residues G814–S833 and Y932–P994. Positions P941–T952 are enriched in pro residues. Low complexity predominate over residues S965–S986.

The protein belongs to the G-protein coupled receptor 2 family. LN-TM7 subfamily. In terms of assembly, monomer and homodimer. Post-translationally, autoproteolytically processed at the GPS region of the GAIN-B domain; this cleavage modulates receptor activity. In terms of tissue distribution, expressed in epidermal precursor cells and pharyngeal primordium. In adults expression is seen in pharyngeal muscle cells and nervous system, the nerve ring, the gonad, and the vulva.

Its subcellular location is the cell membrane. In terms of biological role, has a role in the establishment of anterior-posterior polarity in tissues during embryogenesis. Required for the alignment of the mitotic spindles and division planes. May have a role in cell death events. Required for normal defection and oocyte fertilization. Involved in sperm function. Operates in pharyngeal pumping during feeding. This is Latrophilin-like protein 1 from Caenorhabditis elegans.